The primary structure comprises 163 residues: UPF0416 protein RBE_1121 (163 aa).

It belongs to the UPF0416 family.

This is UPF0416 protein RBE_1121 from Rickettsia bellii (strain RML369-C).